The sequence spans 209 residues: Large ribosomal subunit protein bL25 (209 aa).

Residues 190–209 are disordered; it reads LKSEEAASEGAAEEEAKDGE. Positions 200-209 are enriched in acidic residues; sequence AAEEEAKDGE.

This sequence belongs to the bacterial ribosomal protein bL25 family. CTC subfamily. As to quaternary structure, part of the 50S ribosomal subunit; part of the 5S rRNA/L5/L18/L25 subcomplex. Contacts the 5S rRNA. Binds to the 5S rRNA independently of L5 and L18.

Its function is as follows. This is one of the proteins that binds to the 5S RNA in the ribosome where it forms part of the central protuberance. The protein is Large ribosomal subunit protein bL25 of Brucella anthropi (strain ATCC 49188 / DSM 6882 / CCUG 24695 / JCM 21032 / LMG 3331 / NBRC 15819 / NCTC 12168 / Alc 37) (Ochrobactrum anthropi).